Reading from the N-terminus, the 125-residue chain is Small ribosomal subunit protein eS8 (125 aa).

A disordered region spans residues 1–30 (MTIFQGRATRKPSGGKLRPNHSKRRYELGR).

This sequence belongs to the eukaryotic ribosomal protein eS8 family. Part of the 30S ribosomal subunit.

This Picrophilus torridus (strain ATCC 700027 / DSM 9790 / JCM 10055 / NBRC 100828 / KAW 2/3) protein is Small ribosomal subunit protein eS8.